Consider the following 88-residue polypeptide: Small ribosomal subunit protein bS20 (88 aa).

The tract at residues 69–88 is disordered; sequence KNTASRKKSRLTKRFNKLTG. The span at 71–88 shows a compositional bias: basic residues; that stretch reads TASRKKSRLTKRFNKLTG.

It belongs to the bacterial ribosomal protein bS20 family.

Binds directly to 16S ribosomal RNA. The chain is Small ribosomal subunit protein bS20 from Pelotomaculum thermopropionicum (strain DSM 13744 / JCM 10971 / SI).